We begin with the raw amino-acid sequence, 338 residues long: DNA-directed RNA polymerase subunit alpha (338 aa).

Positions 1–234 are alpha N-terminal domain (alpha-NTD); sequence MIHKNWAELI…DQLSIFVNFE (234 aa). The tract at residues 250–338 is alpha C-terminal domain (alpha-CTD); it reads FNPLLLKKVD…DLAKRFEDQF (89 aa).

This sequence belongs to the RNA polymerase alpha chain family. Homodimer. The RNAP catalytic core consists of 2 alpha, 1 beta, 1 beta' and 1 omega subunit. When a sigma factor is associated with the core the holoenzyme is formed, which can initiate transcription.

The enzyme catalyses RNA(n) + a ribonucleoside 5'-triphosphate = RNA(n+1) + diphosphate. Functionally, DNA-dependent RNA polymerase catalyzes the transcription of DNA into RNA using the four ribonucleoside triphosphates as substrates. The polypeptide is DNA-directed RNA polymerase subunit alpha (Cereibacter sphaeroides (strain ATCC 17029 / ATH 2.4.9) (Rhodobacter sphaeroides)).